A 407-amino-acid polypeptide reads, in one-letter code: Lysine racemase (407 aa).

A signal peptide spans 1–18 (MSLGIRYLALLPLFVITA). Cysteine 19 carries N-palmitoyl cysteine lipidation. Cysteine 19 carries S-diacylglycerol cysteine lipidation. Cysteine 70 and cysteine 96 are disulfide-bonded. Lysine 74 functions as the Proton acceptor in the catalytic mechanism. N6-(pyridoxal phosphate)lysine is present on lysine 74. Substrate is bound at residue arginine 173. Residue tyrosine 299 is the Proton acceptor of the active site. Substrate is bound at residue methionine 347.

The protein belongs to the alanine racemase family. Bsr subfamily. In terms of assembly, forms a head-to-tail homodimer in the structure. Pyridoxal 5'-phosphate serves as cofactor.

The protein localises to the cell membrane. Its subcellular location is the periplasm. The enzyme catalyses L-lysine = D-lysine. It carries out the reaction L-arginine = D-arginine. With respect to regulation, the racemization activity of Lyr is completely inhibited by hydroxylamine. Amino-acid racemase that catalyzes the interconversion of L-lysine and D-lysine. To a lesser extent, is also able to interconvert arginine enantiomers. Cannot use methionine, asparagine, alanine, leucine, glutamine, phenylalanine and histidine as substrates. In Proteus mirabilis, this protein is Lysine racemase.